The sequence spans 571 residues: Urease subunit alpha (571 aa).

A Urease domain is found at 129-571; it reads GGIDSHIHFI…LPMAQRYFLF (443 aa). Positions 134, 136, and 217 each coordinate Ni(2+). An N6-carboxylysine modification is found at lysine 217. A substrate-binding site is contributed by histidine 219. 2 residues coordinate Ni(2+): histidine 246 and histidine 272. The active-site Proton donor is histidine 320. Aspartate 360 serves as a coordination point for Ni(2+).

This sequence belongs to the metallo-dependent hydrolases superfamily. Urease alpha subunit family. Heterotrimer of UreA (gamma), UreB (beta) and UreC (alpha) subunits. Three heterotrimers associate to form the active enzyme. Ni cation serves as cofactor. In terms of processing, carboxylation allows a single lysine to coordinate two nickel ions.

The protein localises to the cytoplasm. The enzyme catalyses urea + 2 H2O + H(+) = hydrogencarbonate + 2 NH4(+). Its pathway is nitrogen metabolism; urea degradation; CO(2) and NH(3) from urea (urease route): step 1/1. The sequence is that of Urease subunit alpha from Cupriavidus necator (strain ATCC 17699 / DSM 428 / KCTC 22496 / NCIMB 10442 / H16 / Stanier 337) (Ralstonia eutropha).